A 94-amino-acid chain; its full sequence is C-X-C motif chemokine 11 (94 aa).

The signal sequence occupies residues 1–21 (MSVKGMAIALAVILCATVVQG). Arg-27 is subject to Citrulline; by PAD2. 2 cysteine pairs are disulfide-bonded: Cys-30-Cys-57 and Cys-32-Cys-74.

As to quaternary structure, interacts with TNFAIP6 (via Link domain). As to expression, high levels in peripheral blood leukocytes, pancreas and liver astrocytes. Moderate levels in thymus, spleen and lung. Low levels in placenta, prostate and small intestine. Also found in epidermal basal layer keratinocytes in skin disorders.

The protein localises to the secreted. In terms of biological role, chemotactic for interleukin-activated T-cells but not unstimulated T-cells, neutrophils or monocytes. Induces calcium release in activated T-cells. Binds to CXCR3. May play an important role in CNS diseases which involve T-cell recruitment. May play a role in skin immune responses. The protein is C-X-C motif chemokine 11 (CXCL11) of Homo sapiens (Human).